The primary structure comprises 195 residues: HTH-type transcriptional regulator BetI (195 aa).

In terms of domain architecture, HTH tetR-type spans 8–68 (EIRRAQLIDA…ATMRHVLRDL (61 aa)). Residues 31–50 (TLASVAQRANISTGIVSHYF) constitute a DNA-binding region (H-T-H motif).

It participates in amine and polyamine biosynthesis; betaine biosynthesis via choline pathway [regulation]. Repressor involved in the biosynthesis of the osmoprotectant glycine betaine. It represses transcription of the choline transporter BetT and the genes of BetAB involved in the synthesis of glycine betaine. The protein is HTH-type transcriptional regulator BetI of Burkholderia mallei (strain NCTC 10247).